Reading from the N-terminus, the 371-residue chain is Probable beta-1,3-galactosyltransferase 12 (371 aa).

The disordered stretch occupies residues 1–36 (MPLFSHRFTTASSSSPASPSYYNKPSSKTHKPNSSS). Low complexity predominate over residues 11-36 (ASSSSPASPSYYNKPSSKTHKPNSSS). The helical; Signal-anchor for type II membrane protein transmembrane segment at 46 to 66 (VAIIFFSLVSVFIGVAGTIFA) threads the bilayer. An N-linked (GlcNAc...) asparagine glycan is attached at Asn-291.

The protein belongs to the glycosyltransferase 31 family. Mn(2+) is required as a cofactor.

It is found in the golgi apparatus membrane. The protein operates within protein modification; protein glycosylation. Functionally, beta-1,3-galactosyltransferase that transfers galactose from UDP-galactose to substrates with a terminal glycosyl residue. This Arabidopsis thaliana (Mouse-ear cress) protein is Probable beta-1,3-galactosyltransferase 12 (B3GALT12).